Reading from the N-terminus, the 155-residue chain is Small ribosomal subunit protein uS9 (155 aa).

The protein belongs to the universal ribosomal protein uS9 family.

This chain is Small ribosomal subunit protein uS9, found in Rhizobium etli (strain ATCC 51251 / DSM 11541 / JCM 21823 / NBRC 15573 / CFN 42).